The following is an 855-amino-acid chain: Spindle and centriole-associated protein 1 (855 aa).

The interval 164-200 (QALNDVDGEEEGTVTSQSGESENENELDNSLNSQSNT) is disordered. Position 235 is a phosphothreonine (Thr-235). Over residues 300-311 (KPNLHALSKPKK) the composition is skewed to basic residues. The interval 300–328 (KPNLHALSKPKKNMLSGSTTSADLPNRTN) is disordered. Residues 314–328 (LSGSTTSADLPNRTN) show a composition bias toward polar residues. Residues 325 to 437 (NRTNSNLDVL…TQARLRQYMV (113 aa)) adopt a coiled-coil conformation. 2 positions are modified to phosphoserine: Ser-640 and Ser-644. Positions 725–751 (GSMEERIAELNRQSMEARGKLLQLIEQ) form a coiled coil. Ser-760, Ser-764, and Ser-819 each carry phosphoserine. A disordered region spans residues 789–834 (EAPESSKCSTVSPVSEINTRRSSGATSNSCSPLNATSGSGRFTPLN). The span at 794–828 (SKCSTVSPVSEINTRRSSGATSNSCSPLNATSGSG) shows a compositional bias: polar residues.

As to quaternary structure, interacts with CEP120.

The protein resides in the cytoplasm. It localises to the cytoskeleton. Its subcellular location is the microtubule organizing center. The protein localises to the centrosome. It is found in the centriole. The protein resides in the spindle. Regulator required for centriole duplication, for proper bipolar spindle formation and chromosome congression in mitosis. The polypeptide is Spindle and centriole-associated protein 1 (SPICE1) (Pongo abelii (Sumatran orangutan)).